Here is a 218-residue protein sequence, read N- to C-terminus: tRNA (guanosine(18)-2'-O)-methyltransferase (218 aa).

S-adenosyl-L-methionine-binding residues include threonine 111 and isoleucine 154.

It belongs to the class IV-like SAM-binding methyltransferase superfamily. RNA methyltransferase TrmH family.

It catalyses the reaction guanosine(18) in tRNA + S-adenosyl-L-methionine = 2'-O-methylguanosine(18) in tRNA + S-adenosyl-L-homocysteine + H(+). Its function is as follows. Catalyzes the 2'-O methylation of guanosine at position 18 in tRNA. This is tRNA (guanosine(18)-2'-O)-methyltransferase from Borreliella burgdorferi (strain ATCC 35210 / DSM 4680 / CIP 102532 / B31) (Borrelia burgdorferi).